Consider the following 438-residue polypeptide: Ribosomal protein uS12 methylthiotransferase RimO (438 aa).

An MTTase N-terminal domain is found at 5-115 (PRVGFVSLGC…VMSAVHTHLP (111 aa)). [4Fe-4S] cluster-binding residues include C14, C50, C79, C146, C150, and C153. In terms of domain architecture, Radical SAM core spans 132–369 (LTPKHYAYLK…MAVQAEISAR (238 aa)). Residues 372–438 (ERRVGQTLQV…SEHDLWGERR (67 aa)) enclose the TRAM domain.

It belongs to the methylthiotransferase family. RimO subfamily. Requires [4Fe-4S] cluster as cofactor.

Its subcellular location is the cytoplasm. The enzyme catalyses L-aspartate(89)-[ribosomal protein uS12]-hydrogen + (sulfur carrier)-SH + AH2 + 2 S-adenosyl-L-methionine = 3-methylsulfanyl-L-aspartate(89)-[ribosomal protein uS12]-hydrogen + (sulfur carrier)-H + 5'-deoxyadenosine + L-methionine + A + S-adenosyl-L-homocysteine + 2 H(+). Catalyzes the methylthiolation of an aspartic acid residue of ribosomal protein uS12. The polypeptide is Ribosomal protein uS12 methylthiotransferase RimO (Chromobacterium violaceum (strain ATCC 12472 / DSM 30191 / JCM 1249 / CCUG 213 / NBRC 12614 / NCIMB 9131 / NCTC 9757 / MK)).